The chain runs to 274 residues: Penicillin-insensitive murein endopeptidase (274 aa).

A signal peptide spans 1–19; the sequence is MKKTAIALLAWFVSSASLA. Cystine bridges form between Cys-44–Cys-265, Cys-187–Cys-235, and Cys-216–Cys-223. Zn(2+)-binding residues include His-110, His-113, Asp-120, Asp-147, and His-150. The interval 225–274 is disordered; that stretch reads DQPLPPPGDGCGAELQSWFEPPKPGTTKPEKKTPPPLPPSCQALLDEHVL.

The protein belongs to the peptidase M74 family. In terms of assembly, dimer. Requires Zn(2+) as cofactor.

It is found in the periplasm. Murein endopeptidase that cleaves the D-alanyl-meso-2,6-diamino-pimelyl amide bond that connects peptidoglycan strands. Likely plays a role in the removal of murein from the sacculus. The sequence is that of Penicillin-insensitive murein endopeptidase from Salmonella paratyphi A (strain ATCC 9150 / SARB42).